A 1128-amino-acid polypeptide reads, in one-letter code: MSRSVLQPSQQKLAEKLTILNDRGVGMLTRLYNIKKACGDPKAKPSYLIDKNLESAVKFIVRKFPAVETRNNNQQLAQLQKEKSEILKNLALYYFTFVDVMEFKDHVCDLLNTIDVCQVFFDITVNFDLTKNYLDLTVTYTTLMILLSRIEERKAIIGLYNYAHEMTHGASDREYPRLGQMIVDYEHPLKKMMEEFVPHSKSLSDALISLQMVYPRRNLSADQWRNAQLLSLISAPSTMLNPAQSDTMPCEYLSLDAMEKWIIFGFILCHGMLNTEATALNLWKLALQSSSCLSLFRDEVFHIHKAAEDLFVNIRGYNKRINDIRECKEAAVSHAGSMHRERRKFLRSALKELATVLSDQPGLLGPKALFVFMALSFARDEIIWLLRHADNMPKKSADDFIDKHIAELIFYMEELRAHVRKYGPVMQRYYVQYLSGFDAVVLNELVQNLSVCPEDESIIMSSFVNTMTSLSVKQVEDGEVFDFRGMRLDWFRLQAYTSVSKASLSLADHRELGKMMNTIIFHTKMVDSLVEMLVETSDLSIFCFYSRAFEKMFQQCLELPSQSRYSIAFPLLCTHFMSCTHELCPEERHHIGDRSLSLCNMFLDEMAKQARNLITDICTEQCTLSDQLLPKHCAKTISQAVNKKSKKQTGKKGEPEREKPGVESMRKNRLVVTNLDKLHTALSELCFSINYVPNMAVWEHTFTPREYLTSHLEIRFTKSIVGMTMYNQATQEIAKPSELLTSVREYMTVLQSIENYVQIDITRVFNNVLLQQTQHLDSHGEPTITSLYTNWYLETLLRQVSNGHIAYFPAMKAFVNLPTENELTFNAEEYSDISEMRSLSELLGPYGMKFLSESLMWHISSQVAELKKLVVENVDVLTQMRTSFDKPDQMAALFKRLSSVDSVLKRMTIIGVILSFRSLAQEALRDVLSYHIPFLVSSIEDFKDHIPRETDMKVAMNVYELSSAAGLPCEIDPALVVALSSQKSENISPEEEYKIACLLMVFVAVSLPTLASNVMSQYSPAIEGHCNNIHCLAKAINQIAAALFTIHKGSIEDRLKEFLALASSSLLKIGQETDKTTTRNRESVYLLLDMIVQESPFLTMDLLESCFPYVLLRNAYHAVYKQSVTSSA.

Ser-2 is subject to N-acetylserine. Positions 640–665 (AVNKKSKKQTGKKGEPEREKPGVESM) are disordered. Residues 651–665 (KKGEPEREKPGVESM) are compositionally biased toward basic and acidic residues. A helical membrane pass occupies residues 995–1015 (IACLLMVFVAVSLPTLASNVM).

Belongs to the HEM-1/HEM-2 family. In terms of assembly, component of the WAVE1 complex composed of ABI2, CYFIP1 or CYFIP2, BRK1, NCKAP1 and WASF1/WAVE1. Within the complex, a heterodimer containing NCKAP1 and CYFIP1 interacts with a heterotrimer formed by WAVE1, ABI2 and BRK1. Component of the WAVE2 complex composed of ABI1, CYFIP1/SRA1, NCKAP1/NAP1 and WASF2/WAVE2. CYFIP2 binds to activated RAC1 which causes the complex to dissociate, releasing activated WASF1. The complex can also be activated by NCK1. Associates preferentially with the first SH3 domain of NCK. Interacts with NYAP1, NYAP2 and MYO16. Interacts with TMEM132D. As to expression, preferentially expressed in brain, heart, liver and testis.

The protein localises to the cell membrane. The protein resides in the cell projection. It is found in the lamellipodium membrane. Its function is as follows. Part of the WAVE complex that regulates lamellipodia formation. The WAVE complex regulates actin filament reorganization via its interaction with the Arp2/3 complex. Actin remodeling activity is regulated by RAC1. As component of the WAVE1 complex, required for BDNF-NTRK2 endocytic trafficking and signaling from early endosomes. The protein is Nck-associated protein 1 (Nckap1) of Rattus norvegicus (Rat).